We begin with the raw amino-acid sequence, 148 residues long: Small ribosomal subunit protein bS16 (148 aa).

A compositionally biased stretch (low complexity) spans 111 to 122 (AAAGEEPVAEAT). The tract at residues 111–148 (AAAGEEPVAEATTPKKKGGKKAEAEDKAEEQKSEEGQA) is disordered. A compositionally biased stretch (basic and acidic residues) spans 130–148 (KKAEAEDKAEEQKSEEGQA).

This sequence belongs to the bacterial ribosomal protein bS16 family.

The protein is Small ribosomal subunit protein bS16 of Saccharopolyspora erythraea (strain ATCC 11635 / DSM 40517 / JCM 4748 / NBRC 13426 / NCIMB 8594 / NRRL 2338).